The following is a 331-amino-acid chain: UDP-N-acetylenolpyruvoylglucosamine reductase (331 aa).

Positions 54–221 (RVGGAAELYV…TQATFQLQPG (168 aa)) constitute an FAD-binding PCMH-type domain. The active site involves Arg200. Ser251 serves as the catalytic Proton donor. Residue Glu321 is part of the active site.

Belongs to the MurB family. FAD is required as a cofactor.

It localises to the cytoplasm. The catalysed reaction is UDP-N-acetyl-alpha-D-muramate + NADP(+) = UDP-N-acetyl-3-O-(1-carboxyvinyl)-alpha-D-glucosamine + NADPH + H(+). It participates in cell wall biogenesis; peptidoglycan biosynthesis. Functionally, cell wall formation. This is UDP-N-acetylenolpyruvoylglucosamine reductase from Nostoc sp. (strain PCC 7120 / SAG 25.82 / UTEX 2576).